Consider the following 101-residue polypeptide: Small ribosomal subunit protein uS14 (101 aa).

Belongs to the universal ribosomal protein uS14 family. As to quaternary structure, part of the 30S ribosomal subunit. Contacts proteins S3 and S10.

Its function is as follows. Binds 16S rRNA, required for the assembly of 30S particles and may also be responsible for determining the conformation of the 16S rRNA at the A site. This chain is Small ribosomal subunit protein uS14, found in Shewanella baltica (strain OS155 / ATCC BAA-1091).